The primary structure comprises 396 residues: 1-deoxy-D-xylulose 5-phosphate reductoisomerase (396 aa).

Residues T10, G11, S12, I13, and N123 each contribute to the NADPH site. K124 contributes to the 1-deoxy-D-xylulose 5-phosphate binding site. E125 is a binding site for NADPH. D149 provides a ligand contact to Mn(2+). S150, E151, S185, and H208 together coordinate 1-deoxy-D-xylulose 5-phosphate. E151 is a Mn(2+) binding site. G214 contributes to the NADPH binding site. 1-deoxy-D-xylulose 5-phosphate is bound by residues S221, N226, K227, and E230. A Mn(2+)-binding site is contributed by E230.

Belongs to the DXR family. Mg(2+) is required as a cofactor. Mn(2+) serves as cofactor.

The enzyme catalyses 2-C-methyl-D-erythritol 4-phosphate + NADP(+) = 1-deoxy-D-xylulose 5-phosphate + NADPH + H(+). The protein operates within isoprenoid biosynthesis; isopentenyl diphosphate biosynthesis via DXP pathway; isopentenyl diphosphate from 1-deoxy-D-xylulose 5-phosphate: step 1/6. Catalyzes the NADPH-dependent rearrangement and reduction of 1-deoxy-D-xylulose-5-phosphate (DXP) to 2-C-methyl-D-erythritol 4-phosphate (MEP). The protein is 1-deoxy-D-xylulose 5-phosphate reductoisomerase of Shewanella baltica (strain OS223).